Here is a 193-residue protein sequence, read N- to C-terminus: Ion-translocating oxidoreductase complex subunit A (193 aa).

The next 6 helical transmembrane spans lie at 5-25 (LLLF…FLGL), 47-67 (FVIT…LLPL), 72-92 (LRTM…EMVV), 102-122 (LLGI…VPLL), 134-154 (AIYG…FAGV), and 171-191 (SIAL…AGLV).

Belongs to the NqrDE/RnfAE family. In terms of assembly, the complex is composed of six subunits: RnfA, RnfB, RnfC, RnfD, RnfE and RnfG.

Its subcellular location is the cell inner membrane. Its function is as follows. Part of a membrane-bound complex that couples electron transfer with translocation of ions across the membrane. The protein is Ion-translocating oxidoreductase complex subunit A of Erwinia tasmaniensis (strain DSM 17950 / CFBP 7177 / CIP 109463 / NCPPB 4357 / Et1/99).